Reading from the N-terminus, the 305-residue chain is tRNA dimethylallyltransferase (305 aa).

8–15 lines the ATP pocket; sequence GPTAVGKT. Residue 10–15 participates in substrate binding; sequence TAVGKT. Residues 33 to 36 form an interaction with substrate tRNA region; sequence DSRQ.

It belongs to the IPP transferase family. As to quaternary structure, monomer. Mg(2+) serves as cofactor.

It catalyses the reaction adenosine(37) in tRNA + dimethylallyl diphosphate = N(6)-dimethylallyladenosine(37) in tRNA + diphosphate. Functionally, catalyzes the transfer of a dimethylallyl group onto the adenine at position 37 in tRNAs that read codons beginning with uridine, leading to the formation of N6-(dimethylallyl)adenosine (i(6)A). The protein is tRNA dimethylallyltransferase of Thermotoga petrophila (strain ATCC BAA-488 / DSM 13995 / JCM 10881 / RKU-1).